The chain runs to 357 residues: Nicotinate-nucleotide--dimethylbenzimidazole phosphoribosyltransferase (357 aa).

Catalysis depends on E323, which acts as the Proton acceptor.

It belongs to the CobT family.

It catalyses the reaction 5,6-dimethylbenzimidazole + nicotinate beta-D-ribonucleotide = alpha-ribazole 5'-phosphate + nicotinate + H(+). It functions in the pathway nucleoside biosynthesis; alpha-ribazole biosynthesis; alpha-ribazole from 5,6-dimethylbenzimidazole: step 1/2. In terms of biological role, catalyzes the synthesis of alpha-ribazole-5'-phosphate from nicotinate mononucleotide (NAMN) and 5,6-dimethylbenzimidazole (DMB). This chain is Nicotinate-nucleotide--dimethylbenzimidazole phosphoribosyltransferase, found in Nitratidesulfovibrio vulgaris (strain DP4) (Desulfovibrio vulgaris).